The primary structure comprises 250 residues: 5-oxoprolinase subunit A (250 aa).

This sequence belongs to the LamB/PxpA family. In terms of assembly, forms a complex composed of PxpA, PxpB and PxpC.

The catalysed reaction is 5-oxo-L-proline + ATP + 2 H2O = L-glutamate + ADP + phosphate + H(+). In terms of biological role, catalyzes the cleavage of 5-oxoproline to form L-glutamate coupled to the hydrolysis of ATP to ADP and inorganic phosphate. This chain is 5-oxoprolinase subunit A, found in Pseudomonas fluorescens (strain Pf0-1).